We begin with the raw amino-acid sequence, 338 residues long: Lipoyl synthase (338 aa).

Residues 1-22 (MTTVQEAVPNLIPTQDVTPRPA) form a disordered region. [4Fe-4S] cluster contacts are provided by Cys84, Cys89, Cys95, Cys110, Cys114, Cys117, and Ser324. In terms of domain architecture, Radical SAM core spans 96–313 (FSGGTATFMI…AEEGYKMGFK (218 aa)).

It belongs to the radical SAM superfamily. Lipoyl synthase family. [4Fe-4S] cluster is required as a cofactor.

It is found in the cytoplasm. It catalyses the reaction [[Fe-S] cluster scaffold protein carrying a second [4Fe-4S](2+) cluster] + N(6)-octanoyl-L-lysyl-[protein] + 2 oxidized [2Fe-2S]-[ferredoxin] + 2 S-adenosyl-L-methionine + 4 H(+) = [[Fe-S] cluster scaffold protein] + N(6)-[(R)-dihydrolipoyl]-L-lysyl-[protein] + 4 Fe(3+) + 2 hydrogen sulfide + 2 5'-deoxyadenosine + 2 L-methionine + 2 reduced [2Fe-2S]-[ferredoxin]. Its pathway is protein modification; protein lipoylation via endogenous pathway; protein N(6)-(lipoyl)lysine from octanoyl-[acyl-carrier-protein]: step 2/2. Catalyzes the radical-mediated insertion of two sulfur atoms into the C-6 and C-8 positions of the octanoyl moiety bound to the lipoyl domains of lipoate-dependent enzymes, thereby converting the octanoylated domains into lipoylated derivatives. The polypeptide is Lipoyl synthase (Pseudomonas entomophila (strain L48)).